Here is a 76-residue protein sequence, read N- to C-terminus: Large ribosomal subunit protein bL31 (76 aa).

The protein belongs to the bacterial ribosomal protein bL31 family. Type A subfamily. In terms of assembly, part of the 50S ribosomal subunit.

In terms of biological role, binds the 23S rRNA. The protein is Large ribosomal subunit protein bL31 of Methylocella silvestris (strain DSM 15510 / CIP 108128 / LMG 27833 / NCIMB 13906 / BL2).